Consider the following 426-residue polypeptide: Trophoblast glycoprotein (426 aa).

The N-terminal stretch at 1–31 is a signal peptide; that stretch reads MPGAGSRGPSAGDGRLRLARLALVLLGWVSA. Over 32–361 the chain is Extracellular; that stretch reads SAPSSSLPSS…ATLPQSLQTS (330 aa). The segment covering 34–51 has biased composition (low complexity); sequence PSSSLPSSSTSPAAFLAS. Residues 34-54 are disordered; it reads PSSSLPSSSTSPAAFLASGSA. The LRRNT domain occupies 53–91; the sequence is SAQPPPAERCPAACECSEAARTVKCVNRNLLEVPADLPP. Disulfide bonds link C62/C68 and C66/C77. LRR repeat units follow at residues 92-113, 116-139, and 141-163; these read YVRN…AFAR, PLAD…GAFE, and LPGL…FTFA. N124 is a glycosylation site (N-linked (GlcNAc...) asparagine). An N-linked (GlcNAc...) asparagine glycan is attached at N166. LRR repeat units follow at residues 172 to 210, 215 to 238, 239 to 261, and 262 to 281; these read PSPL…AALR, LRGL…LLDQ, LPSL…ASFR, and NLTH…VLHN. The N-linked (GlcNAc...) asparagine glycan is linked to N281. Positions 289–352 constitute an LRRCT domain; sequence GLAHVRVFLD…LTSSDLDCDA (64 aa). Cystine bridges form between C304–C329 and C306–C350. A helical membrane pass occupies residues 362–382; sequence YVFLGIVLALIGAIFLLVLYL. Residues 383-426 lie on the Cytoplasmic side of the membrane; sequence NRKGIKKWMHNIRDACRDHMEGYHYRYEINADPRLTNLSSNSDV. Position 424 is a phosphoserine (S424).

Post-translationally, highly glycosylated.

It is found in the cell membrane. Functionally, may function as an inhibitor of Wnt/beta-catenin signaling by indirectly interacting with LRP6 and blocking Wnt3a-dependent LRP6 internalization. The chain is Trophoblast glycoprotein (Tpbg) from Rattus norvegicus (Rat).